A 155-amino-acid chain; its full sequence is Ribosomal RNA large subunit methyltransferase H (155 aa).

S-adenosyl-L-methionine is bound by residues Leu72, Gly103, and 122–127 (LSPLTL).

It belongs to the RNA methyltransferase RlmH family. In terms of assembly, homodimer.

It is found in the cytoplasm. It catalyses the reaction pseudouridine(1915) in 23S rRNA + S-adenosyl-L-methionine = N(3)-methylpseudouridine(1915) in 23S rRNA + S-adenosyl-L-homocysteine + H(+). Specifically methylates the pseudouridine at position 1915 (m3Psi1915) in 23S rRNA. This Histophilus somni (strain 2336) (Haemophilus somnus) protein is Ribosomal RNA large subunit methyltransferase H.